We begin with the raw amino-acid sequence, 385 residues long: Citrate synthase (385 aa).

Active-site residues include H223, H263, and D318.

The protein belongs to the citrate synthase family. In terms of assembly, homodimer.

The enzyme catalyses oxaloacetate + acetyl-CoA + H2O = citrate + CoA + H(+). The protein operates within carbohydrate metabolism; tricarboxylic acid cycle; isocitrate from oxaloacetate: step 1/2. Its activity is regulated as follows. Allosterically inhibited by NADH. In Thermoplasma acidophilum (strain ATCC 25905 / DSM 1728 / JCM 9062 / NBRC 15155 / AMRC-C165), this protein is Citrate synthase (gltA).